Consider the following 474-residue polypeptide: Synaptotagmin-17 (474 aa).

A disordered region spans residues 60 to 117 (WLMASRSNDKDGDSVHTASDVPLTPRTNSPDGRRSSSDTSKSTYSLTRRISSLDSRRP). The span at 96-117 (SDTSKSTYSLTRRISSLDSRRP) shows a compositional bias: low complexity. S118 and S119 each carry phosphoserine. C2 domains follow at residues 184-310 (QLGM…HWWK) and 321-455 (ELGE…EQWH).

It belongs to the synaptotagmin family. In terms of tissue distribution, expressed in brain and kidney.

Its subcellular location is the membrane. Functionally, plays a role in dendrite formation by melanocytes. This chain is Synaptotagmin-17 (Syt17), found in Rattus norvegicus (Rat).